We begin with the raw amino-acid sequence, 202 residues long: uncharacterized protein (202 aa).

In terms of domain architecture, Smr spans 116–196 (LDLHGMTCSE…GKGTTWVLLK (81 aa)).

This is an uncharacterized protein from Treponema pallidum (strain Nichols).